The chain runs to 437 residues: GTP-binding protein ERG (437 aa).

Polar residues predominate over residues 39-50; the sequence is QPNLDEPTSINE. The tract at residues 39 to 65 is disordered; it reads QPNLDEPTSINEDGSSSDSVFDSSQYP. Low complexity predominate over residues 51–62; sequence DGSSSDSVFDSS. 2 positions are modified to phosphoserine: S111 and S112. The 182-residue stretch at 152-333 folds into the Era-type G domain; that stretch reads KSLNVGIIGP…LMDQAVKKPW (182 aa). The interval 160 to 167 is G1; the sequence is GPPNAGKS. 160 to 167 is a binding site for GTP; that stretch reads GPPNAGKS. Residues 186–190 form a G2 region; sequence NTTTH. The tract at residues 207 to 210 is G3; it reads DTPG. Residues 207–211 and 279–282 contribute to the GTP site; these read DTPGL and NKVD. Residues 279-282 are G4; sequence NKVD. Positions 309–311 are G5; that stretch reads ISG. The region spanning 361–437 is the KH type-2 domain; that stretch reads VHQEIPYGLE…VHLILQVKLK (77 aa).

It belongs to the TRAFAC class TrmE-Era-EngA-EngB-Septin-like GTPase superfamily. Era GTPase family.

In terms of biological role, has a crucial role in plant growth and development, possibly by influencing mitochondrial division. In Arabidopsis thaliana (Mouse-ear cress), this protein is GTP-binding protein ERG (ERG).